A 134-amino-acid chain; its full sequence is ATP synthase epsilon chain (134 aa).

The protein belongs to the ATPase epsilon chain family. F-type ATPases have 2 components, CF(1) - the catalytic core - and CF(0) - the membrane proton channel. CF(1) has five subunits: alpha(3), beta(3), gamma(1), delta(1), epsilon(1). CF(0) has three main subunits: a, b and c.

It localises to the cell inner membrane. Produces ATP from ADP in the presence of a proton gradient across the membrane. The protein is ATP synthase epsilon chain of Rhizobium meliloti (strain 1021) (Ensifer meliloti).